We begin with the raw amino-acid sequence, 152 residues long: Interleukin-2 (152 aa).

An N-terminal signal peptide occupies residues 1-20 (MYRMQLLSCIALTLALVANG). A glycan (O-linked (GalNAc...) threonine) is linked at T23. Residues C78 and C126 are joined by a disulfide bond.

This sequence belongs to the IL-2 family.

The protein localises to the secreted. Cytokine produced by activated CD4-positive helper T-cells and to a lesser extend activated CD8-positive T-cells and natural killer (NK) cells that plays pivotal roles in the immune response and tolerance. Binds to a receptor complex composed of either the high-affinity trimeric IL-2R (IL2RA/CD25, IL2RB/CD122 and IL2RG/CD132) or the low-affinity dimeric IL-2R (IL2RB and IL2RG). Interaction with the receptor leads to oligomerization and conformation changes in the IL-2R subunits resulting in downstream signaling starting with phosphorylation of JAK1 and JAK3. In turn, JAK1 and JAK3 phosphorylate the receptor to form a docking site leading to the phosphorylation of several substrates including STAT5. This process leads to activation of several pathways including STAT, phosphoinositide-3-kinase/PI3K and mitogen-activated protein kinase/MAPK pathways. Functions as a T-cell growth factor and can increase NK-cell cytolytic activity as well. Promotes strong proliferation of activated B-cells and subsequently immunoglobulin production. Plays a pivotal role in regulating the adaptive immune system by controlling the survival and proliferation of regulatory T-cells, which are required for the maintenance of immune tolerance. Moreover, participates in the differentiation and homeostasis of effector T-cell subsets, including Th1, Th2, Th17 as well as memory CD8-positive T-cells. The protein is Interleukin-2 (IL2) of Orcinus orca (Killer whale).